The sequence spans 438 residues: Elongation factor 1-alpha (438 aa).

The region spanning 5–228 (KPHLNLVVIG…ALDSLEPPPK (224 aa)) is the tr-type G domain. Residues 14–21 (GHVDHGKS) are G1. 14-21 (GHVDHGKS) serves as a coordination point for GTP. S21 serves as a coordination point for Mg(2+). The G2 stretch occupies residues 70-74 (GVTIA). The segment at 91–94 (DAPG) is G3. GTP contacts are provided by residues 91-95 (DAPGH) and 153-156 (NKMD). The tract at residues 153–156 (NKMD) is G4. The interval 194-196 (SAW) is G5.

It belongs to the TRAFAC class translation factor GTPase superfamily. Classic translation factor GTPase family. EF-Tu/EF-1A subfamily.

Its subcellular location is the cytoplasm. The catalysed reaction is GTP + H2O = GDP + phosphate + H(+). Functionally, GTP hydrolase that promotes the GTP-dependent binding of aminoacyl-tRNA to the A-site of ribosomes during protein biosynthesis. The protein is Elongation factor 1-alpha of Staphylothermus marinus (strain ATCC 43588 / DSM 3639 / JCM 9404 / F1).